Reading from the N-terminus, the 220-residue chain is Aspartic protease inhibitor 5 (220 aa).

The signal sequence occupies residues 1–23 (MMKCLFLLCLCLLPIVVFSSTFT). The propeptide occupies 24 to 32 (SQNLIDLPS). Positions 26–31 (NLIDLP) match the Vacuolar targeting signal motif. N-linked (GlcNAc...) asparagine glycosylation occurs at asparagine 51. Disulfide bonds link cysteine 80–cysteine 125 and cysteine 174–cysteine 185.

The protein belongs to the protease inhibitor I3 (leguminous Kunitz-type inhibitor) family.

Its subcellular location is the vacuole. Functionally, inhibitor of cathepsin D (aspartic protease). May also inhibit trypsin and chymotrypsin (serine proteases). Protects the plant by inhibiting proteases of invading organisms. In Solanum tuberosum (Potato), this protein is Aspartic protease inhibitor 5.